We begin with the raw amino-acid sequence, 114 residues long: Large ribosomal subunit protein bL20c (114 aa).

The protein belongs to the bacterial ribosomal protein bL20 family.

It localises to the plastid. Its function is as follows. Binds directly to 23S ribosomal RNA and is necessary for the in vitro assembly process of the 50S ribosomal subunit. It is not involved in the protein synthesizing functions of that subunit. The polypeptide is Large ribosomal subunit protein bL20c (Prototheca wickerhamii).